Here is a 306-residue protein sequence, read N- to C-terminus: MSWIERILNKSNITPTRRANIPEGVWTKCDSCGQVLYRAELERNLEVCPKCDHHMRMAARDRLHSLLDEGSLVELGSELEPKDVLKFRDSKKYKDRLATAQKETGEKDALVVMKGTLHGMPVVAAAFEFAFMGGSMGSVVGARFVRAVEQALEDNCPLICFSASGGARMQEALMSLMQMAKTSAALAKMQERGLPYISVLTDPTMGGVSASFAMLGDLNIAEPKALIGFAGPRVIEQTVREKLPAGFQRSEFLIEKGAIDMIVRRPELRLKLASILAKLMNLPAPSPDAPREAVVVPPVPDQDHEA.

The 270-residue stretch at 25–294 (VWTKCDSCGQ…PSPDAPREAV (270 aa)) folds into the CoA carboxyltransferase N-terminal domain. Positions 29, 32, 48, and 51 each coordinate Zn(2+). A C4-type zinc finger spans residues 29–51 (CDSCGQVLYRAELERNLEVCPKC). Residues 286 to 306 (SPDAPREAVVVPPVPDQDHEA) form a disordered region.

This sequence belongs to the AccD/PCCB family. As to quaternary structure, acetyl-CoA carboxylase is a heterohexamer composed of biotin carboxyl carrier protein (AccB), biotin carboxylase (AccC) and two subunits each of ACCase subunit alpha (AccA) and ACCase subunit beta (AccD). Zn(2+) serves as cofactor.

It is found in the cytoplasm. It carries out the reaction N(6)-carboxybiotinyl-L-lysyl-[protein] + acetyl-CoA = N(6)-biotinyl-L-lysyl-[protein] + malonyl-CoA. The protein operates within lipid metabolism; malonyl-CoA biosynthesis; malonyl-CoA from acetyl-CoA: step 1/1. Its function is as follows. Component of the acetyl coenzyme A carboxylase (ACC) complex. Biotin carboxylase (BC) catalyzes the carboxylation of biotin on its carrier protein (BCCP) and then the CO(2) group is transferred by the transcarboxylase to acetyl-CoA to form malonyl-CoA. This chain is Acetyl-coenzyme A carboxylase carboxyl transferase subunit beta, found in Cronobacter sakazakii (strain ATCC BAA-894) (Enterobacter sakazakii).